The chain runs to 171 residues: Tetratricopeptide repeat protein 9C (171 aa).

TPR repeat units lie at residues 8 to 41, 72 to 107, and 108 to 141; these read AQVY…LRGL, THCY…QPDN, and AKAL…QPKD.

It belongs to the TTC9 family.

In Mus musculus (Mouse), this protein is Tetratricopeptide repeat protein 9C (Ttc9c).